A 317-amino-acid chain; its full sequence is Ribosomal protein L11 methyltransferase (317 aa).

Threonine 158, glycine 179, aspartate 201, and asparagine 244 together coordinate S-adenosyl-L-methionine.

This sequence belongs to the methyltransferase superfamily. PrmA family.

Its subcellular location is the cytoplasm. It carries out the reaction L-lysyl-[protein] + 3 S-adenosyl-L-methionine = N(6),N(6),N(6)-trimethyl-L-lysyl-[protein] + 3 S-adenosyl-L-homocysteine + 3 H(+). Functionally, methylates ribosomal protein L11. In Streptococcus pyogenes serotype M3 (strain ATCC BAA-595 / MGAS315), this protein is Ribosomal protein L11 methyltransferase.